Reading from the N-terminus, the 580-residue chain is Frizzled-10-B (580 aa).

Positions 1–20 (MEPRVVTALLLSLAAALCSG) are cleaved as a signal peptide. Residues 21–224 (ISSINPDRSG…DVYWSKNDKK (204 aa)) lie on the Extracellular side of the membrane. The 122-residue stretch at 29–150 (SGEGRCQAIE…NDPNYLCMEA (122 aa)) folds into the FZ domain. Disulfide bonds link C34-C95, C42-C88, C79-C117, C106-C147, and C110-C134. Residue N48 is glycosylated (N-linked (GlcNAc...) asparagine). An N-linked (GlcNAc...) asparagine glycan is attached at N153. The disordered stretch occupies residues 173–194 (RPNSGHEMYPKDPKGRSSCENS). Positions 180 to 189 (MYPKDPKGRS) are enriched in basic and acidic residues. The chain crosses the membrane as a helical span at residues 225-245 (FAFIWIAIWSLLCFFSSAFTV). The Cytoplasmic portion of the chain corresponds to 246–261 (LTFLVDPLRFKYPERP). A helical transmembrane segment spans residues 262–282 (IIFLSMCYCVYSVGYIIRLFA). Residues 283–309 (GADSIACDRDSGQLYVIQEGLESTGCT) are Extracellular-facing. Residues 310 to 330 (IVFLILYYFGMASSLWWVILT) traverse the membrane as a helical segment. Residues 331–350 (LTWFLAAGKKWGHEAIEANS) lie on the Cytoplasmic side of the membrane. The chain crosses the membrane as a helical span at residues 351–371 (SYFHLAAWAIPAVKTIMILVM). Over 372 to 392 (RRVAGDELTGVCYVGSMDVNA) the chain is Extracellular. Residues 393–413 (LTGFVLIPLACYLIIGTSFIL) form a helical membrane-spanning segment. At 414-442 (SGFVALFHIRRVMKTGGENTDKLEKLMVR) the chain is on the cytoplasmic side. A helical transmembrane segment spans residues 443–463 (IGVFSVLYTVPATCVIACYFY). At 464-501 (ERLNMDFWKILATQDKCKMDSQTKTLDCTMTSSIPAVE) the chain is on the extracellular side. The chain crosses the membrane as a helical span at residues 502 to 522 (IFMVKIFMLLVVGITSGMWIW). The Cytoplasmic portion of the chain corresponds to 523–580 (TSKTVQSWQNVFSKSLKKRNRNKPASVITSAGIYKKPQQPPKIHHGKYESALRSPTCV). The Lys-Thr-X-X-X-Trp motif, mediates interaction with the PDZ domain of Dvl family members signature appears at 525–530 (KTVQSW). The segment at 558-580 (KPQQPPKIHHGKYESALRSPTCV) is disordered. The PDZ-binding motif lies at 578-580 (TCV).

Belongs to the G-protein coupled receptor Fz/Smo family. Expressed in liver, lung, brain, testis, heart and ovary.

It is found in the cell membrane. In terms of biological role, receptor for Wnt proteins. Most of frizzled receptors are coupled to the beta-catenin canonical signaling pathway, which leads to the activation of disheveled proteins, inhibition of GSK-3 kinase, nuclear accumulation of beta-catenin and activation of Wnt target genes. A second signaling pathway involving PKC and calcium fluxes has been seen for some family members, but it is not yet clear if it represents a distinct pathway or if it can be integrated in the canonical pathway, as PKC seems to be required for Wnt-mediated inactivation of GSK-3 kinase. Both pathways seem to involve interactions with G-proteins. May be involved in transduction and intercellular transmission of polarity information during tissue morphogenesis and/or in differentiated tissues. Activated by Wnt8. Could have an antagonizing activity in the morphogenesis during development. The chain is Frizzled-10-B (fzd10-b) from Xenopus laevis (African clawed frog).